Reading from the N-terminus, the 802-residue chain is Copper-exporting P-type ATPase (802 aa).

HMA domains lie at Lys5–Ala70 and Glu72–Ser138. Residues Cys16, Cys19, Cys83, and Cys86 each coordinate Cu(+). 6 consecutive transmembrane segments (helical) span residues Leu161–Asn181, Trp192–Gly212, Met224–Ile244, Leu256–Ala276, Tyr411–Val431, and Pro438–Ala458. Residue Asp495 is the 4-aspartylphosphate intermediate of the active site. 2 residues coordinate Mg(2+): Asp690 and Asp694. A run of 2 helical transmembrane segments spans residues Leu748–Leu767 and Val771–Leu790.

The protein belongs to the cation transport ATPase (P-type) (TC 3.A.3) family. Type IB subfamily.

The protein localises to the cell membrane. It catalyses the reaction Cu(+)(in) + ATP + H2O = Cu(+)(out) + ADP + phosphate + H(+). Its function is as follows. Involved in copper export. The chain is Copper-exporting P-type ATPase (copA) from Staphylococcus aureus (strain bovine RF122 / ET3-1).